The following is a 435-amino-acid chain: Putative F-box/FBD/LRR-repeat protein At5g56810 (435 aa).

In terms of domain architecture, F-box spans proline 14–asparagine 62. 6 LRR repeats span residues cysteine 64–leucine 95, leucine 146–cysteine 173, valine 174–arginine 199, lysine 222–aspartate 248, serine 266–leucine 291, and tyrosine 316–histidine 341. An FBD domain is found at cysteine 353–leucine 404.

The chain is Putative F-box/FBD/LRR-repeat protein At5g56810 from Arabidopsis thaliana (Mouse-ear cress).